The primary structure comprises 376 residues: 23S rRNA (uracil(747)-C(5))-methyltransferase RlmC (376 aa).

[4Fe-4S] cluster is bound by residues Cys-3, Cys-11, Cys-14, and Cys-87. S-adenosyl-L-methionine contacts are provided by Gln-212, Phe-241, Glu-262, and Asn-307. The active-site Nucleophile is the Cys-334.

Belongs to the class I-like SAM-binding methyltransferase superfamily. RNA M5U methyltransferase family. RlmC subfamily.

The enzyme catalyses uridine(747) in 23S rRNA + S-adenosyl-L-methionine = 5-methyluridine(747) in 23S rRNA + S-adenosyl-L-homocysteine + H(+). In terms of biological role, catalyzes the formation of 5-methyl-uridine at position 747 (m5U747) in 23S rRNA. This Yersinia pestis bv. Antiqua (strain Antiqua) protein is 23S rRNA (uracil(747)-C(5))-methyltransferase RlmC.